Reading from the N-terminus, the 554-residue chain is Chaperonin GroEL (554 aa).

ATP is bound by residues 29–32, K50, 86–90, G418, and D499; these read TLGP and DGTTT. The tract at residues 528–554 is disordered; sequence HEEDNNTNRSGGGVGGGHHGGMGGMDF. Residues 537–554 show a composition bias toward gly residues; sequence SGGGVGGGHHGGMGGMDF.

Belongs to the chaperonin (HSP60) family. As to quaternary structure, forms a cylinder of 14 subunits composed of two heptameric rings stacked back-to-back. Interacts with the co-chaperonin GroES.

The protein resides in the cytoplasm. The enzyme catalyses ATP + H2O + a folded polypeptide = ADP + phosphate + an unfolded polypeptide.. Functionally, together with its co-chaperonin GroES, plays an essential role in assisting protein folding. The GroEL-GroES system forms a nano-cage that allows encapsulation of the non-native substrate proteins and provides a physical environment optimized to promote and accelerate protein folding. The polypeptide is Chaperonin GroEL (Orientia tsutsugamushi (strain Boryong) (Rickettsia tsutsugamushi)).